The following is a 336-amino-acid chain: MKERIVNLETLDFETSQEVSLRPSLWEDFIGQEKIKSNLQISICAAKKRQESLDHMLFFGPPGLGKTSISHIIAKEMETNIKITAAPMIEKSGDLAAILTNLQAKDILFIDEIHRLSPAIEEVLYPAMEDFRLDIIIGSGPAAQTIKIDLPPFTLIGATTRAGMLSNPLRDRFGMSFRMQFYSPSELALIIKKAAIKLNQDIKEESADEIAKRSRGTPRIALRLLKRVRDFALVKNSSLMDLNITLHALNELGVNELGFDEADLAYLSLLANAQGRPVGLNTIAASMREDEGTIEDVIEPFLLANGYLERTAKGRIATPKTHALLKIPTLKSQTLF.

Residues 1 to 182 (MKERIVNLET…FGMSFRMQFY (182 aa)) form a large ATPase domain (RuvB-L) region. ATP is bound by residues Leu-21, Arg-22, Gly-63, Lys-66, Thr-67, Ser-68, 129–131 (EDF), Arg-172, Tyr-182, and Arg-219. Mg(2+) is bound at residue Thr-67. The small ATPAse domain (RuvB-S) stretch occupies residues 183-253 (SPSELALIIK…ITLHALNELG (71 aa)). Residues 256-336 (ELGFDEADLA…IPTLKSQTLF (81 aa)) form a head domain (RuvB-H) region. DNA-binding residues include Arg-310 and Arg-315.

Belongs to the RuvB family. Homohexamer. Forms an RuvA(8)-RuvB(12)-Holliday junction (HJ) complex. HJ DNA is sandwiched between 2 RuvA tetramers; dsDNA enters through RuvA and exits via RuvB. An RuvB hexamer assembles on each DNA strand where it exits the tetramer. Each RuvB hexamer is contacted by two RuvA subunits (via domain III) on 2 adjacent RuvB subunits; this complex drives branch migration. In the full resolvosome a probable DNA-RuvA(4)-RuvB(12)-RuvC(2) complex forms which resolves the HJ.

It localises to the cytoplasm. The enzyme catalyses ATP + H2O = ADP + phosphate + H(+). The RuvA-RuvB-RuvC complex processes Holliday junction (HJ) DNA during genetic recombination and DNA repair, while the RuvA-RuvB complex plays an important role in the rescue of blocked DNA replication forks via replication fork reversal (RFR). RuvA specifically binds to HJ cruciform DNA, conferring on it an open structure. The RuvB hexamer acts as an ATP-dependent pump, pulling dsDNA into and through the RuvAB complex. RuvB forms 2 homohexamers on either side of HJ DNA bound by 1 or 2 RuvA tetramers; 4 subunits per hexamer contact DNA at a time. Coordinated motions by a converter formed by DNA-disengaged RuvB subunits stimulates ATP hydrolysis and nucleotide exchange. Immobilization of the converter enables RuvB to convert the ATP-contained energy into a lever motion, pulling 2 nucleotides of DNA out of the RuvA tetramer per ATP hydrolyzed, thus driving DNA branch migration. The RuvB motors rotate together with the DNA substrate, which together with the progressing nucleotide cycle form the mechanistic basis for DNA recombination by continuous HJ branch migration. Branch migration allows RuvC to scan DNA until it finds its consensus sequence, where it cleaves and resolves cruciform DNA. The protein is Holliday junction branch migration complex subunit RuvB of Helicobacter pylori (strain HPAG1).